Reading from the N-terminus, the 97-residue chain is MKLTTVLVVALLVLAACQFTVTDNSGDDPENPSLRSVGENQNPDSTKTITAWATRDMTNMRRGLNRPSKRCLAGSARCEFHKPSSCCSGHCIFWWCA.

The N-terminal stretch at 1–22 is a signal peptide; the sequence is MKLTTVLVVALLVLAACQFTVT. Residues 23-46 form a disordered region; sequence DNSGDDPENPSLRSVGENQNPDST. Residues 23–68 constitute a propeptide that is removed on maturation; that stretch reads DNSGDDPENPSLRSVGENQNPDSTKTITAWATRDMTNMRRGLNRPS. Intrachain disulfides connect Cys71–Cys87, Cys78–Cys91, and Cys86–Cys96.

Belongs to the conotoxin O1 superfamily. Expressed by the venom duct.

The protein resides in the secreted. Functionally, probable neurotoxin with unknown target. Possibly targets ion channels. This Californiconus californicus (California cone) protein is Conotoxin Cal6.1a.